The primary structure comprises 299 residues: SET domain-containing protein 9 (299 aa).

The 174-residue stretch at 122-295 (FSVAQATSSL…QGEELFSNYY (174 aa)) folds into the SET domain. Y294 contributes to the S-adenosyl-L-methionine binding site.

It belongs to the class V-like SAM-binding methyltransferase superfamily.

The chain is SET domain-containing protein 9 (SETD9) from Homo sapiens (Human).